A 239-amino-acid polypeptide reads, in one-letter code: 7-cyano-7-deazaguanine synthase (239 aa).

Residue 16–26 (FSGGQDSTTCL) participates in ATP binding. Zn(2+)-binding residues include cysteine 204, cysteine 219, cysteine 222, and cysteine 225.

This sequence belongs to the QueC family. Requires Zn(2+) as cofactor.

It catalyses the reaction 7-carboxy-7-deazaguanine + NH4(+) + ATP = 7-cyano-7-deazaguanine + ADP + phosphate + H2O + H(+). It participates in purine metabolism; 7-cyano-7-deazaguanine biosynthesis. Catalyzes the ATP-dependent conversion of 7-carboxy-7-deazaguanine (CDG) to 7-cyano-7-deazaguanine (preQ(0)). This chain is 7-cyano-7-deazaguanine synthase, found in Polaromonas naphthalenivorans (strain CJ2).